A 352-amino-acid chain; its full sequence is UDP-N-acetylglucosamine--N-acetylmuramyl-(pentapeptide) pyrophosphoryl-undecaprenol N-acetylglucosamine transferase (352 aa).

Residues T13–G15, N125, R161, S189, I242, A261–E266, and Q286 contribute to the UDP-N-acetyl-alpha-D-glucosamine site.

This sequence belongs to the glycosyltransferase 28 family. MurG subfamily.

The protein resides in the cell inner membrane. The enzyme catalyses di-trans,octa-cis-undecaprenyl diphospho-N-acetyl-alpha-D-muramoyl-L-alanyl-D-glutamyl-meso-2,6-diaminopimeloyl-D-alanyl-D-alanine + UDP-N-acetyl-alpha-D-glucosamine = di-trans,octa-cis-undecaprenyl diphospho-[N-acetyl-alpha-D-glucosaminyl-(1-&gt;4)]-N-acetyl-alpha-D-muramoyl-L-alanyl-D-glutamyl-meso-2,6-diaminopimeloyl-D-alanyl-D-alanine + UDP + H(+). It participates in cell wall biogenesis; peptidoglycan biosynthesis. Functionally, cell wall formation. Catalyzes the transfer of a GlcNAc subunit on undecaprenyl-pyrophosphoryl-MurNAc-pentapeptide (lipid intermediate I) to form undecaprenyl-pyrophosphoryl-MurNAc-(pentapeptide)GlcNAc (lipid intermediate II). The protein is UDP-N-acetylglucosamine--N-acetylmuramyl-(pentapeptide) pyrophosphoryl-undecaprenol N-acetylglucosamine transferase of Erwinia tasmaniensis (strain DSM 17950 / CFBP 7177 / CIP 109463 / NCPPB 4357 / Et1/99).